Reading from the N-terminus, the 325-residue chain is Large ribosomal subunit protein uL1m (325 aa).

Residues 1-50 (MAAAVRCMGRALIHHQRHSLSKMVYQTSLCSCSVNIRVPNRHFAAATKSA) constitute a mitochondrion transit peptide.

The protein belongs to the universal ribosomal protein uL1 family. In terms of assembly, component of the mitochondrial large ribosomal subunit (mt-LSU). Mature mammalian 55S mitochondrial ribosomes consist of a small (28S) and a large (39S) subunit. The 28S small subunit contains a 12S ribosomal RNA (12S mt-rRNA) and 30 different proteins. The 39S large subunit contains a 16S rRNA (16S mt-rRNA), a copy of mitochondrial valine transfer RNA (mt-tRNA(Val)), which plays an integral structural role, and 52 different proteins.

Its subcellular location is the mitochondrion. This Homo sapiens (Human) protein is Large ribosomal subunit protein uL1m (MRPL1).